The primary structure comprises 362 residues: H-2 class I histocompatibility antigen, L-D alpha chain (362 aa).

Residues 1-24 form the signal peptide; sequence MGAMAPRTLLLLLAAALAPTQTRA. An alpha-1 region spans residues 25–114; it reads GPHSMRYFET…LLGYYNQSAG (90 aa). Residues 25 to 309 are Extracellular-facing; that stretch reads GPHSMRYFET…PPPSTDSYMV (285 aa). An N-linked (GlcNAc...) asparagine glycan is attached at N110. Residues 115–206 form an alpha-2 region; the sequence is GTHTLQWMYG…KNGNATLLRT (92 aa). C125 and C188 are disulfide-bonded. N-linked (GlcNAc...) asparagine glycans are attached at residues N200 and N280. The interval 207–298 is alpha-3; it reads DSPKAHVTHH…GLPEPLTLRW (92 aa). The region spanning 209-297 is the Ig-like C1-type domain; it reads PKAHVTHHPR…EGLPEPLTLR (89 aa). An intrachain disulfide couples C227 to C283. The connecting peptide stretch occupies residues 299–309; it reads EPPPSTDSYMV. A helical transmembrane segment spans residues 310 to 331; it reads IVAVLGVLGAMAIIGAVVAFVM. Residues 332–362 lie on the Cytoplasmic side of the membrane; sequence KRRRNTGGKGGDYALAPGSQSSEMSLRDCKA. Residues 340–362 are disordered; the sequence is KGGDYALAPGSQSSEMSLRDCKA. A phosphoserine mark is found at S353 and S356.

The protein belongs to the MHC class I family. As to quaternary structure, heterodimer of an alpha chain and a beta chain (beta-2-microglobulin).

The protein localises to the membrane. In terms of biological role, involved in the presentation of foreign antigens to the immune system. The sequence is that of H-2 class I histocompatibility antigen, L-D alpha chain (H2-L) from Mus musculus (Mouse).